The chain runs to 371 residues: Probable inactive methyltransferase Os04g0175900 (371 aa).

L137–N143 provides a ligand contact to substrate. The segment at L170–M188 is substrate binding. The S-adenosyl-L-methionine site is built by G216, D239, M260, and K273.

The protein belongs to the class I-like SAM-binding methyltransferase superfamily. Cation-independent O-methyltransferase family. COMT subfamily.

The sequence is that of Probable inactive methyltransferase Os04g0175900 from Oryza sativa subsp. japonica (Rice).